The primary structure comprises 323 residues: Acetyl-coenzyme A carboxylase carboxyl transferase subunit alpha (323 aa).

A CoA carboxyltransferase C-terminal domain is found at 39–293; the sequence is RLAGKSQQLT…KRSLAESLRQ (255 aa).

This sequence belongs to the AccA family. As to quaternary structure, acetyl-CoA carboxylase is a heterohexamer composed of biotin carboxyl carrier protein (AccB), biotin carboxylase (AccC) and two subunits each of ACCase subunit alpha (AccA) and ACCase subunit beta (AccD).

The protein resides in the cytoplasm. It carries out the reaction N(6)-carboxybiotinyl-L-lysyl-[protein] + acetyl-CoA = N(6)-biotinyl-L-lysyl-[protein] + malonyl-CoA. It participates in lipid metabolism; malonyl-CoA biosynthesis; malonyl-CoA from acetyl-CoA: step 1/1. Its function is as follows. Component of the acetyl coenzyme A carboxylase (ACC) complex. First, biotin carboxylase catalyzes the carboxylation of biotin on its carrier protein (BCCP) and then the CO(2) group is transferred by the carboxyltransferase to acetyl-CoA to form malonyl-CoA. The chain is Acetyl-coenzyme A carboxylase carboxyl transferase subunit alpha from Cupriavidus necator (strain ATCC 17699 / DSM 428 / KCTC 22496 / NCIMB 10442 / H16 / Stanier 337) (Ralstonia eutropha).